Reading from the N-terminus, the 327-residue chain is Probable cell division protein WhiA (327 aa).

The H-T-H motif DNA-binding region spans 275–308 (SLEELGRLADPVMTKDAVAGRIRRLLSMADRKAK). The disordered stretch occupies residues 307-327 (AKTEGIPDTESAVTPELLEEA).

It belongs to the WhiA family.

Involved in cell division and chromosome segregation. This is Probable cell division protein WhiA from Mycobacteroides abscessus (strain ATCC 19977 / DSM 44196 / CCUG 20993 / CIP 104536 / JCM 13569 / NCTC 13031 / TMC 1543 / L948) (Mycobacterium abscessus).